Consider the following 555-residue polypeptide: Poly(A) polymerase PAPa (555 aa).

A disordered region spans residues 1-20 (MNNQAYGVTPPISVANSTPK). ATP-binding positions include 86–88 (FGS), 99–101 (DID), Asp153, Lys214, Tyr223, and 232–233 (GV). Residues Asp99, Asp101, and Asp153 each contribute to the Mg(2+) site. Residues 532-555 (KRKRAVSKNEGKKKPKSVGTVSAA) form a disordered region.

The protein belongs to the poly(A) polymerase family. Requires Mg(2+) as cofactor. It depends on Mn(2+) as a cofactor.

Its subcellular location is the nucleus. The catalysed reaction is RNA(n) + ATP = RNA(n)-3'-adenine ribonucleotide + diphosphate. Its function is as follows. Polymerase that creates the 3'-poly(A) tail of mRNA's. May acquire specificity through interaction with a cleavage and polyadenylation factor. This Candida albicans (strain SC5314 / ATCC MYA-2876) (Yeast) protein is Poly(A) polymerase PAPa (PAPA).